We begin with the raw amino-acid sequence, 184 residues long: Oligoribonuclease (184 aa).

Residues Leu-8 to Leu-171 enclose the Exonuclease domain. Residue Tyr-129 is part of the active site.

This sequence belongs to the oligoribonuclease family.

The protein localises to the cytoplasm. 3'-to-5' exoribonuclease specific for small oligoribonucleotides. The polypeptide is Oligoribonuclease (Buchnera aphidicola subsp. Acyrthosiphon pisum (strain APS) (Acyrthosiphon pisum symbiotic bacterium)).